The primary structure comprises 174 residues: Dual-action ribosomal maturation protein DarP (174 aa).

The protein belongs to the DarP family.

The protein localises to the cytoplasm. Its function is as follows. Member of a network of 50S ribosomal subunit biogenesis factors which assembles along the 30S-50S interface, preventing incorrect 23S rRNA structures from forming. Promotes peptidyl transferase center (PTC) maturation. This chain is Dual-action ribosomal maturation protein DarP, found in Pseudomonas aeruginosa (strain LESB58).